The primary structure comprises 907 residues: Protein translocase subunit SecA (907 aa).

Residues Gln87, 105–109, and Asp506 each bind ATP; that span reads GEGKT. Residues 834 to 850 show a composition bias toward basic and acidic residues; sequence LEQQREEEAREQAEKMK. The segment at 834 to 907 is disordered; the sequence is LEQQREEEAR…KYKQCHGKIE (74 aa). A compositionally biased stretch (low complexity) spans 864–875; it reads QPQPSQQQGEQP. Cys891, Cys893, Cys902, and His903 together coordinate Zn(2+). Over residues 897–907 the composition is skewed to basic residues; the sequence is KKYKQCHGKIE.

The protein belongs to the SecA family. Monomer and homodimer. Part of the essential Sec protein translocation apparatus which comprises SecA, SecYEG and auxiliary proteins SecDF-YajC and YidC. Zn(2+) serves as cofactor.

The protein localises to the cell inner membrane. It localises to the cytoplasm. It carries out the reaction ATP + H2O + cellular proteinSide 1 = ADP + phosphate + cellular proteinSide 2.. Its function is as follows. Part of the Sec protein translocase complex. Interacts with the SecYEG preprotein conducting channel. Has a central role in coupling the hydrolysis of ATP to the transfer of proteins into and across the cell membrane, serving both as a receptor for the preprotein-SecB complex and as an ATP-driven molecular motor driving the stepwise translocation of polypeptide chains across the membrane. The chain is Protein translocase subunit SecA from Alcanivorax borkumensis (strain ATCC 700651 / DSM 11573 / NCIMB 13689 / SK2).